The primary structure comprises 345 residues: Aspartate--ammonia ligase (345 aa).

The protein belongs to the class-II aminoacyl-tRNA synthetase family. AsnA subfamily.

Its subcellular location is the cytoplasm. It catalyses the reaction L-aspartate + NH4(+) + ATP = L-asparagine + AMP + diphosphate + H(+). It functions in the pathway amino-acid biosynthesis; L-asparagine biosynthesis; L-asparagine from L-aspartate (ammonia route): step 1/1. In Bacteroides thetaiotaomicron (strain ATCC 29148 / DSM 2079 / JCM 5827 / CCUG 10774 / NCTC 10582 / VPI-5482 / E50), this protein is Aspartate--ammonia ligase.